A 200-amino-acid polypeptide reads, in one-letter code: MVKDIKVMVVGDMSVGKTCLLISYTTNSFPGEYVPTVFDNYNANAIVNNTPINLGLWDTAGSEEYNSFRPLSYPGTDVFIICFSLISQTSFENVIKKWHPEIIQNMEQVPPIILVGTKLDLRGKGKSEEKEVTPEMGEQMRAAIGAYKYSECSALTQDGLTTVFEEAGRVVLFPPSKEELAKSKKDSKKGDKDSKDCIIQ.

11-18 (GDMSVGKT) contacts GTP. The short motif at 33–41 (YVPTVFDNY) is the Effector region element. GTP is bound by residues 58 to 62 (DTAGS) and 117 to 120 (TKLD). The disordered stretch occupies residues 178-200 (EELAKSKKDSKKGDKDSKDCIIQ). C197 carries the post-translational modification Cysteine methyl ester. C197 carries S-geranylgeranyl cysteine lipidation. The propeptide at 198–200 (IIQ) is removed in mature form.

The protein belongs to the small GTPase superfamily. Rho family.

The protein localises to the cell membrane. This Dictyostelium discoideum (Social amoeba) protein is Rho-related protein racH (racH).